A 309-amino-acid polypeptide reads, in one-letter code: Heme A synthase (309 aa).

Topologically, residues 1 to 6 (MTKKLK) are cytoplasmic. Residues 7–27 (ILSVISTICMIPLLLGGALVT) form a helical membrane-spanning segment. Residues 28 to 62 (KTGSADGCGNSWPLCEGQFLPTKISFEMFIELSHR) are Extracellular-facing. A disulfide bond links Cys35 and Cys42. The active site involves Glu58. His61 provides a ligand contact to heme o. Residues 63–83 (GVTGVVGILIVYLTYLVWKEL) traverse the membrane as a helical segment. Topologically, residues 84 to 88 (RHNKE) are cytoplasmic. Residues 89-109 (VVFLAFSALSLMILQALIGAA) traverse the membrane as a helical segment. At 110–123 (AVVWGQSDFALATH) the chain is on the extracellular side. His123 provides a ligand contact to heme o. Residues 124-144 (FGISLVCFAAVFLLMLQLFEI) form a helical membrane-spanning segment. Residues 145 to 159 (DKKLHTEDIHINKTH) lie on the Cytoplasmic side of the membrane. A helical membrane pass occupies residues 160 to 180 (RIEIYAISFYTMCVVYSGALV). At 181-211 (RHTDSNLACRDWPLCVNNSSFGISDYNFYQW) the chain is on the extracellular side. Cys189 and Cys195 form a disulfide bridge. Residues 212 to 232 (VQMGHRLAAGILFIWTVILTI) form a helical membrane-spanning segment. Position 216 (His216) interacts with heme b. At 233 to 247 (RMVKHYKNSKVFYWS) the chain is on the cytoplasmic side. A helical transmembrane segment spans residues 248 to 268 (WLITLGLITLQVLFGALIIFT). Over 269–271 (SLN) the chain is Extracellular. A helical membrane pass occupies residues 272–292 (LAIALFHALFITCYFGMLSFF). His278 contacts heme b. Topologically, residues 293-309 (MHLSFRAKRREKYSNQS) are cytoplasmic.

It belongs to the COX15/CtaA family. Type 1 subfamily. Interacts with CtaB. Heme b is required as a cofactor.

It is found in the cell membrane. The enzyme catalyses Fe(II)-heme o + 2 A + H2O = Fe(II)-heme a + 2 AH2. It participates in porphyrin-containing compound metabolism; heme A biosynthesis; heme A from heme O: step 1/1. In terms of biological role, catalyzes the conversion of heme O to heme A by two successive hydroxylations of the methyl group at C8. The first hydroxylation forms heme I, the second hydroxylation results in an unstable dihydroxymethyl group, which spontaneously dehydrates, resulting in the formyl group of heme A. This is Heme A synthase from Oceanobacillus iheyensis (strain DSM 14371 / CIP 107618 / JCM 11309 / KCTC 3954 / HTE831).